Reading from the N-terminus, the 750-residue chain is DDT domain-containing protein DDR4 (750 aa).

The interval 1 to 125 (MGSSSDIVPD…ITSLVPPPEP (125 aa)) is disordered. Residues 45–54 (RAQQRLQELQ) show a composition bias toward low complexity. The segment covering 55–77 (AAERKLKPPKKEYKREQHRRREE) has biased composition (basic and acidic residues). The segment covering 78–100 (VVEEDEDSEDDDQEDEENDGDDE) has biased composition (acidic residues). The DDT domain occupies 133-192 (LRSMWELASVLNFLHVFRPLLKINAEFSAEEFETALLTPNDTLSDIHIPLLKAIPPVTRM). 2 disordered regions span residues 450–505 (NGRS…TDFV) and 532–750 (LKKR…TDNS). Over residues 451–471 (GRSTSSTHPTEPVNDTASGRS) the composition is skewed to polar residues. A compositionally biased stretch (acidic residues) spans 545 to 585 (EGDEEKGDEEYKWDEDNAEYEEEEEEEEEEDSLSASEEDSD). Over residues 595 to 606 (RRETKLRSRSND) the composition is skewed to basic and acidic residues. Over residues 688-707 (NADTTNGKENNQLNKSNGTT) the composition is skewed to polar residues. The span at 741 to 750 (LKDDDKTDNS) shows a compositional bias: basic and acidic residues.

As to quaternary structure, interacts (via the DDT domain) with CHR11 (via C-terminus).

It is found in the nucleus. Its function is as follows. Probable transcription regulator. The sequence is that of DDT domain-containing protein DDR4 from Arabidopsis thaliana (Mouse-ear cress).